A 760-amino-acid polypeptide reads, in one-letter code: MASFLKPVNSQGLWLSLLLAITYLFLLPSAGQSLDPSGIGLAAGCSQSQGGISSFAALPRPCNDSVCTLPDLGWSCQRTAQDTANQQQSPFNHTGHFLTTSGWTWPNWTCSPSQCQLLIHLPTWQIVKQDFLLLLKEWDLLTMCQRCSDLLTKTPGFILRFAGETLILVANLIEFVLVSWSLWLCSVLVYVAQAVPGKFLLYMAAFCTTFWAWPRETASSLIRIVTTPLTLIGFLNKTGIGLISHCLALTWNMFMTWSLLPWVTLMKMMKILITSSRVLTRSGRPKRTSSKSLKHKLKISRAIQKKQGKKTPVEERTIPGVQIKKLREDPPKGVILRCTDQFGDHVGYASAVKLEKGQTGIVLPIHVWTDTVYINGPNGKLKMADFTALYEVTNHDSLIMTSAMAGWGSILGVRPRPLTTIDAVKLKNYSLFTERDGKWYVQAAKCIAPAEGMFRVVSDTRPGDSGLPLFDMKMNVVAVHRGTWPSERFPENRAFAILPVPDLTSSSSPKFTGCETYSEAETAYEMADNFSDGEEILIRTKGQSYRTFIGSNKVALLSIRKLEEELSRGPIGLWADDTEDDESAPRRSGNGLFRSTPEKQSQAKTPSPKVEESAAPPPAPRAEKVRHVRRSEMTPEQKRADNLRRRKAKAAKKTPSTPPKKSKDKAPTLSQVAELVEKAVRAALTVQPRRSRASSKISIGGRNPGRKPQVSIQLDPVPSQSTSVPPKDSQAGESAWLGPRRSYRPVQKSTVGQKQEPRRN.

Positions 1–33 (MASFLKPVNSQGLWLSLLLAITYLFLLPSAGQS) are cleaved as a signal peptide. 4 helical membrane passes run 172–192 (LIEF…VYVA), 194–214 (AVPG…WAWP), 218–235 (ASSL…IGFL), and 240–260 (IGLI…WSLL). A Peptidase S39 domain is found at 318–515 (IPGVQIKKLR…SSSPKFTGCE (198 aa)). Residues histidine 366, aspartate 396, and serine 465 each act as for protease activity in the active site. Disordered regions lie at residues 572-672 (GLWA…LSQV) and 684-760 (LTVQ…PRRN). Residues 621 to 643 (RAEKVRHVRRSEMTPEQKRADNL) are compositionally biased toward basic and acidic residues.

The protein belongs to the peptidase S39B family. In terms of processing, specific enzymatic cleavages in vivo yield mature proteins. The protease probably cleaves itself and releases the VPg protein.

The protein localises to the membrane. Its function is as follows. Precursor from which the VPg molecule is probably released at the onset of the RNA synthesis. Essential for virus replication. The protein is Protein P1 of Pea enation mosaic virus-1 (strain WSG) (PEMV-1).